Reading from the N-terminus, the 88-residue chain is Small ribosomal subunit protein bS20 (88 aa).

Disordered regions lie at residues 1–23 (MANS…HNAA) and 69–88 (PNKA…AMAA). The span at 69–81 (PNKAARHKSRLNT) shows a compositional bias: basic residues.

It belongs to the bacterial ribosomal protein bS20 family.

In terms of biological role, binds directly to 16S ribosomal RNA. The polypeptide is Small ribosomal subunit protein bS20 (Alcanivorax borkumensis (strain ATCC 700651 / DSM 11573 / NCIMB 13689 / SK2)).